We begin with the raw amino-acid sequence, 114 residues long: Probable non-functional T cell receptor beta variable 5-7 (114 aa).

Residues 1–21 (MGPGLLCWVLLCPLGEGPVDA) form the signal peptide. The Ig-like domain occupies 22–114 (GVTQSPTHLI…SALYLCASSL (93 aa)). Cysteine 42 and cysteine 110 form a disulfide bridge. Asparagine 90 carries an N-linked (GlcNAc...) asparagine glycan.

Alpha-beta TR is a heterodimer composed of an alpha and beta chain; disulfide-linked. The alpha-beta TR is associated with the transmembrane signaling CD3 coreceptor proteins to form the TR-CD3 (TcR or TCR). The assembly of alpha-beta TR heterodimers with CD3 occurs in the endoplasmic reticulum where a single alpha-beta TR heterodimer associates with one CD3D-CD3E heterodimer, one CD3G-CD3E heterodimer and one CD247 homodimer forming a stable octameric structure. CD3D-CD3E and CD3G-CD3E heterodimers preferentially associate with TR alpha and TR beta chains, respectively. The association of the CD247 homodimer is the last step of TcR assembly in the endoplasmic reticulum and is required for transport to the cell surface.

Its subcellular location is the cell membrane. Probable non-functional open reading frame (ORF) of V region of the variable domain of T cell receptor (TR) beta chain. Non-functional ORF generally cannot participate in the synthesis of a productive T cell receptor (TR) chain due to altered V-(D)-J or switch recombination and/or splicing site (at mRNA level) and/or conserved amino acid change (protein level). Alpha-beta T cell receptors are antigen specific receptors which are essential to the immune response and are present on the cell surface of T lymphocytes. Recognize peptide-major histocompatibility (MH) (pMH) complexes that are displayed by antigen presenting cells (APC), a prerequisite for efficient T cell adaptive immunity against pathogens. Binding of alpha-beta TR to pMH complex initiates TR-CD3 clustering on the cell surface and intracellular activation of LCK that phosphorylates the ITAM motifs of CD3G, CD3D, CD3E and CD247 enabling the recruitment of ZAP70. In turn ZAP70 phosphorylates LAT, which recruits numerous signaling molecules to form the LAT signalosome. The LAT signalosome propagates signal branching to three major signaling pathways, the calcium, the mitogen-activated protein kinase (MAPK) kinase and the nuclear factor NF-kappa-B (NF-kB) pathways, leading to the mobilization of transcription factors that are critical for gene expression and essential for T cell growth and differentiation. The T cell repertoire is generated in the thymus, by V-(D)-J rearrangement. This repertoire is then shaped by intrathymic selection events to generate a peripheral T cell pool of self-MH restricted, non-autoaggressive T cells. Post-thymic interaction of alpha-beta TR with the pMH complexes shapes TR structural and functional avidity. The protein is Probable non-functional T cell receptor beta variable 5-7 of Homo sapiens (Human).